The following is a 931-amino-acid chain: Protocadherin gamma-A5 (931 aa).

The N-terminal stretch at 1–29 (MASPPRGWGCGELLLPFMLLGTLCEPGSG) is a signal peptide. 6 Cadherin domains span residues 30 to 133 (QIRY…FPRF), 134 to 242 (RDEE…APLF), 243 to 347 (TPSE…APEV), 348 to 452 (ILTS…PPNF), 453 to 562 (PQAS…TPEI), and 570 to 683 (DGST…TPID). At 30–692 (QIRYSMPEEL…DPEDLDLTLY (663 aa)) the chain is on the extracellular side. Asparagine 419 and asparagine 545 each carry an N-linked (GlcNAc...) asparagine glycan. The chain crosses the membrane as a helical span at residues 693-713 (LVVAVAAVSCVFLAFVIVLLV). The Cytoplasmic segment spans residues 714-931 (LRLRRWHKSR…KKKSGKKEKK (218 aa)). 2 disordered regions span residues 800–840 (NKEE…WPNN) and 901–931 (ATLT…KEKK). Positions 809 to 840 (APPNTDWRFSQAQRPGTSGSQNGDDTGTWPNN) are enriched in polar residues. Residues 921–931 (NKKKSGKKEKK) show a composition bias toward basic residues.

It is found in the cell membrane. Its function is as follows. Potential calcium-dependent cell-adhesion protein. May be involved in the establishment and maintenance of specific neuronal connections in the brain. In Homo sapiens (Human), this protein is Protocadherin gamma-A5 (PCDHGA5).